An 826-amino-acid chain; its full sequence is U-box domain-containing protein 4 (826 aa).

The stretch at 172-204 forms a coiled coil; sequence RSNQEILIEAVALERQKEMAEQSENNAEVEFLD. The U-box domain occupies 229–303; sequence AILADFFCPL…ANWCETNDVK (75 aa). The tract at residues 330-501 is disordered; that stretch reads GADVSARKVS…TRRDLSDFSP (172 aa). The span at 347 to 360 shows a compositional bias: polar residues; that stretch reads ASSSETGKPSFSSR. The segment covering 391 to 414 has biased composition (basic and acidic residues); sequence DARRGSLNDFEDRSNDSRELRTDA. Position 396 is a phosphoserine (Ser396). Residues 416 to 428 are compositionally biased toward low complexity; sequence GRSSVSSTTRGSV. Positions 492–501 are enriched in basic and acidic residues; the sequence is TRRDLSDFSP. 7 ARM repeats span residues 530–570, 573–612, 614–653, 655–694, 696–734, 736–775, and 778–817; these read NETR…LLAK, MDNRIVIGNSGAIVLLVELLYSTDSATQENAVTALLNLSI, DNNKKAIADAGAIEPLIHVLENGSSEAKENSAATLFSLSV, EENKIKIGQSGAIGPLVDLLGNGTPRGKKDAATALFNLSI, QENKAMIVQSGAVRYLIDLMDPAAGMVDKAVAVLANLAT, PEGRNAIGQEGGIPLLVEVVELGSARGKENAAAALLQLST, and GRFCNMVLQEGAVPPLVALSQSGTPRAREKAQALLSYFRN.

The catalysed reaction is S-ubiquitinyl-[E2 ubiquitin-conjugating enzyme]-L-cysteine + [acceptor protein]-L-lysine = [E2 ubiquitin-conjugating enzyme]-L-cysteine + N(6)-ubiquitinyl-[acceptor protein]-L-lysine.. Its pathway is protein modification; protein ubiquitination. Functions as an E3 ubiquitin ligase. The sequence is that of U-box domain-containing protein 4 (PUB4) from Arabidopsis thaliana (Mouse-ear cress).